A 178-amino-acid polypeptide reads, in one-letter code: Bifunctional protein PyrR (178 aa).

The short motif at 99 to 111 (VILVDDVLFTGRT) is the PRPP-binding element.

The protein belongs to the purine/pyrimidine phosphoribosyltransferase family. PyrR subfamily. As to quaternary structure, homodimer and homohexamer; in equilibrium.

It carries out the reaction UMP + diphosphate = 5-phospho-alpha-D-ribose 1-diphosphate + uracil. Its function is as follows. Regulates transcriptional attenuation of the pyrimidine nucleotide (pyr) operon by binding in a uridine-dependent manner to specific sites on pyr mRNA. This disrupts an antiterminator hairpin in the RNA and favors formation of a downstream transcription terminator, leading to a reduced expression of downstream genes. Also displays a weak uracil phosphoribosyltransferase activity which is not physiologically significant. In Limosilactobacillus reuteri subsp. reuteri (strain JCM 1112) (Lactobacillus reuteri), this protein is Bifunctional protein PyrR.